A 1727-amino-acid polypeptide reads, in one-letter code: MAAFFPPSSAELRKVKRVQFGILSPDEIRNMSVARVEHPETYENGKPKAGGLLDPAMGTIDKTQRCQTCSGTMAECPGHFGHIELAKPVFHIGFIDTVLKILRCVCYHCSKLLTDTNEHSFRQALKIRNQKHRLNAVVDCCKNKKVCAIGGEEEEEHDLSKTDEELDKPVKHGGCGNVLPKITKEDLKIIVEFKDVTDESIEKKSVLSAERVLNILKRIKDEDSRAMGINPDWARADWMIATVLPVPPPPVRPSIMMDTSTRGEDDLTHKLADIVKANRELQRQEKNGAPAHIIAEATQFLQFHVATYVDNEIPGLPQAQQRSGRPLKSIRQRLKGKEGRIRGNLMGKRVDFSARTVITADPNLSIDQVGVPRSIALNLTYPETVTPFNIDKMRELIRNGPSEHPGAKYIIREDGTRFDLRFVKKVSDTHLECGYKVERHINDGDVVIFNRQPSLHKMSMMGHRIKVMPYSTFRLNLSVTSPYNADFDGDEMNLHVPQTLETRAEVIEIMMVPRQIVSPQSNRPVMGIVQDTLLGSRLFTKRDCFMEKDLVMNILMWLPSWDGKVPPPAILKPKQLWTGKQLFSLIIPDINLIRFTSTHNDKEPNECSAGDTRVIIERGELLAGILCKRSLGAANGSIIHVVMNEHGHDTCRLFIDQTQTVVNHWLINRGFTMGIGDTIADSATMAKVTLTISSAKNQVKELIIKAQNKQFECQPGKSVIETFEQKVNQVLNKARDTAGSSAQDSLSEDNNLKAMVTAGSKGSFINISQMMACVGQQNVEGKRIPFGFQSRTLPHFTKDDYGPESRGFVENSYLRGLTPQEFFFHAMGGREGLIDTAVKTSETGYIQRRLVKAMEDVSIKYDATVRNSLGDVIQFAYGEDGIDGCFVENQSIDSLRKDNTELERMYRHQVDKPDYGDGWMDPLVIEHVRNDSLTRDTLEKEFERIKSDRSLLRNEIIPSGEANWPLPVNLRRLINNAQKLFNIDIRRVSDLNPAVVVLEIEKLVARLKIIATADTTEDDENFNRAWAEVYFNATMLFSILVRSTFASKRVLTEFRLTEKAFLWVCGEIESKFLQALAHPGEMVGALAAQSIGEPATQMTLNTFHYAGVSSKNVTLGVPRLKEIINIAKQVKTPSLTIYLKPHMARDMDRAKIVKSQLEYTTLANVTSATEIYYDPDPQNTIISEDAEFVNSYFELPDEEIDVHSMSPWLLRIELDRGMVTDKKLTMADITQCVVRDFGLSLNCIFSDDNAEKLILRIRMVESQETKGTDNDDDDQFLRRIESNMLSEMVLRGIKGIKKVFMRTDDKIPKVTENGGFGVREEWILDTDGVSLLEVMSHPDVDHTRTTSNDIVEIIQVLGIEAVRNALLKELRAVISFDGSYVNYRHLAILADVMTYRGHLMAITRHGINRVETGPLMRCSFEETVEILMDAAMFSETDDVKGVTENIILGQLPPLGTGSFEVFLNQDMIKNAHSIALPEPSNVSYPDTPGSQTPSYSYGDGSTTPFHNPYDAPLSPFNETFRGDFSPSAMNSPGYNANKSYGSSYQYFPQSPTYSPTSPSYSPTSPSYSPTSPSYSPTSPSYSPTSPSYSPTSPSYSPTSPFYSPTSPSYSPTSPSYSPTSPSYSPTSPSYSPTSPSYSPTSPSYSPTSPSYSPTSPSYSPTSPSYSPTSPSYSPTSPSYSPTSPSYSPSSPSYSPSSPSYSPSSPSYSPSSPTFTNKYNYQPNNKKK.

Positions 66, 69, 76, 79, 106, 109, 147, and 175 each coordinate Zn(2+). Mg(2+)-binding residues include D486, D488, and D490. A bridging helix region spans residues 819–831 (PQEFFFHAMGGRE). A Glycyl lysine isopeptide (Lys-Gly) (interchain with G-Cter in ubiquitin) cross-link involves residue K1266. 2 disordered regions span residues 1478-1512 (EPSN…YDAP) and 1551-1727 (PTYS…NKKK). Polar residues predominate over residues 1480-1505 (SNVSYPDTPGSQTPSYSYGDGSTTPF). Tandem repeats lie at residues 1553-1559 (YSPTSPS), 1560-1566 (YSPTSPS), 1567-1573 (YSPTSPS), 1574-1580 (YSPTSPS), 1581-1587 (YSPTSPS), 1588-1594 (YSPTSPS), 1595-1601 (YSPTSPF), 1602-1608 (YSPTSPS), 1609-1615 (YSPTSPS), 1616-1622 (YSPTSPS), 1623-1629 (YSPTSPS), 1630-1636 (YSPTSPS), 1637-1643 (YSPTSPS), 1644-1650 (YSPTSPS), 1651-1657 (YSPTSPS), 1658-1664 (YSPTSPS), 1665-1671 (YSPTSPS), 1672-1678 (YSPTSPS), 1679-1685 (YSPTSPS), 1686-1692 (YSPSSPS), 1693-1699 (YSPSSPS), 1700-1706 (YSPSSPS), and 1707-1713 (YSPSSPT). The interval 1553-1713 (YSPTSPSYSP…SPSYSPSSPT (161 aa)) is C-terminal domain (CTD); 23 X 7 AA tandem repeats of Y-S-P-[ST]-S-P-[FST].

Belongs to the RNA polymerase beta' chain family. In terms of assembly, component of the RNA polymerase II (Pol II) complex consisting of 12 subunits. The tandem heptapeptide repeats in the C-terminal domain (CTD) can be highly phosphorylated. The phosphorylation activates Pol II. Phosphorylation occurs mainly at residues 'Ser-2' and 'Ser-5' of the heptapeptide repeat. The phosphorylation state is believed to result from the balanced action of site-specific CTD kinases and phosphatase, and a 'CTD code' that specifies the position of Pol II within the transcription cycle has been proposed. In terms of processing, following transcription stress, the elongating form of RNA polymerase II (RNA pol IIo) is polyubiquitinated via 'Lys-63'-linkages on Lys-1266 at DNA damage sites without leading to degradation: ubiquitination promotes RNA pol IIo backtracking to allow access by the transcription-coupled nucleotide excision repair (TC-NER) machinery. Subsequent DEF1-dependent polyubiquitination by the elongin complex via 'Lys-48'-linkages may lead to proteasome-mediated degradation; presumably at stalled RNA pol II where TC-NER has failed, to halt global transcription and enable 'last resort' DNA repair pathways.

It localises to the nucleus. The catalysed reaction is RNA(n) + a ribonucleoside 5'-triphosphate = RNA(n+1) + diphosphate. Functionally, DNA-dependent RNA polymerase catalyzes the transcription of DNA into RNA using the four ribonucleoside triphosphates as substrates. Largest and catalytic component of RNA polymerase II which synthesizes mRNA precursors and many functional non-coding RNAs. Forms the polymerase active center together with the second largest subunit. Pol II is the central component of the basal RNA polymerase II transcription machinery. It is composed of mobile elements that move relative to each other. RPB1 is part of the core element with the central large cleft, the clamp element that moves to open and close the cleft and the jaws that are thought to grab the incoming DNA template. At the start of transcription, a single-stranded DNA template strand of the promoter is positioned within the central active site cleft of Pol II. A bridging helix emanates from RPB1 and crosses the cleft near the catalytic site and is thought to promote translocation of Pol II by acting as a ratchet that moves the RNA-DNA hybrid through the active site by switching from straight to bent conformations at each step of nucleotide addition. During transcription elongation, Pol II moves on the template as the transcript elongates. Elongation is influenced by the phosphorylation status of the C-terminal domain (CTD) of Pol II largest subunit (RPB1), which serves as a platform for assembly of factors that regulate transcription initiation, elongation, termination and mRNA processing. The chain is DNA-directed RNA polymerase II subunit rpb1 (polr2a) from Dictyostelium discoideum (Social amoeba).